The following is a 596-amino-acid chain: Potassium-transporting ATPase potassium-binding subunit (596 aa).

The next 10 membrane-spanning stretches (helical) occupy residues 6–26 (ILTI…LGGF), 67–87 (AIGL…LQLF), 136–156 (GLTT…IALI), 177–197 (ITLY…VGQG), 283–303 (LSNF…CFTF), 314–334 (WVVL…AVHF), 413–433 (GLYG…LMIG), 450–470 (MVAI…AIAV), 518–538 (MLAI…LALA), and 560–580 (LFIV…YVPA).

This sequence belongs to the KdpA family. As to quaternary structure, the system is composed of three essential subunits: KdpA, KdpB and KdpC.

The protein localises to the cell inner membrane. In terms of biological role, part of the high-affinity ATP-driven potassium transport (or Kdp) system, which catalyzes the hydrolysis of ATP coupled with the electrogenic transport of potassium into the cytoplasm. This subunit binds the periplasmic potassium ions and delivers the ions to the membrane domain of KdpB through an intramembrane tunnel. In Polynucleobacter asymbioticus (strain DSM 18221 / CIP 109841 / QLW-P1DMWA-1) (Polynucleobacter necessarius subsp. asymbioticus), this protein is Potassium-transporting ATPase potassium-binding subunit.